Here is a 911-residue protein sequence, read N- to C-terminus: DNA ligase 4 (911 aa).

ATP-binding residues include E271, T272, K273, L274, R278, E331, K345, F367, E427, K432, K449, and K451. The active-site N6-AMP-lysine intermediate is the K273. E331 is a binding site for Mg(2+). Residue E427 coordinates Mg(2+). Residues 610-620 are required for catalytic activity; that stretch reads LATKHLHVGDD. 2 consecutive BRCT domains span residues 654–743 and 808–911; these read KVSN…PRFM and SPLS…QYLL.

Belongs to the ATP-dependent DNA ligase family. Interacts with XRCC4; the LIG4-XRCC4 subcomplex has a 1:2 stoichiometry and XRCC4 is required for LIG4 stability. Component of the core long-range non-homologous end joining (NHEJ) complex (also named DNA-PK complex) composed of PRKDC, LIG4, XRCC4, XRCC6/Ku70, XRCC5/Ku86 and NHEJ1/XLF. Additional component of the NHEJ complex includes PAXX. Following autophosphorylation, PRKDC dissociates from DNA, leading to formation of the short-range NHEJ complex, composed of LIG4, XRCC4, XRCC6/Ku70, XRCC5/Ku86 and NHEJ1/XLF. Interacts with DCLRE1C; the interaction is direct. Interacts with APLF. Mg(2+) is required as a cofactor.

The protein resides in the nucleus. It catalyses the reaction ATP + (deoxyribonucleotide)n-3'-hydroxyl + 5'-phospho-(deoxyribonucleotide)m = (deoxyribonucleotide)n+m + AMP + diphosphate.. DNA ligase involved in DNA non-homologous end joining (NHEJ); required for double-strand break (DSB) repair and V(D)J recombination. Catalyzes the NHEJ ligation step of the broken DNA during DSB repair by resealing the DNA breaks after the gap filling is completed. Joins single-strand breaks in a double-stranded polydeoxynucleotide in an ATP-dependent reaction. LIG4 is mechanistically flexible: it can ligate nicks as well as compatible DNA overhangs alone, while in the presence of XRCC4, it can ligate ends with 2-nucleotides (nt) microhomology and 1-nt gaps. Forms a subcomplex with XRCC4; the LIG4-XRCC4 subcomplex is responsible for the NHEJ ligation step and XRCC4 enhances the joining activity of LIG4. Binding of the LIG4-XRCC4 complex to DNA ends is dependent on the assembly of the DNA-dependent protein kinase complex DNA-PK to these DNA ends. LIG4 regulates nuclear localization of XRCC4. The polypeptide is DNA ligase 4 (Mus musculus (Mouse)).